The sequence spans 193 residues: Putative F-box protein At1g31072 (193 aa).

An F-box domain is found at 4 to 53 (EKTLDSIPIDVFLDIFSRLPAKSVGRSCCVSNRWASILGSQDFKELFLTM).

This chain is Putative F-box protein At1g31072, found in Arabidopsis thaliana (Mouse-ear cress).